A 225-amino-acid polypeptide reads, in one-letter code: UPF0725 protein At5g63820 (225 aa).

It belongs to the UPF0725 (EMB2204) family.

This chain is UPF0725 protein At5g63820, found in Arabidopsis thaliana (Mouse-ear cress).